Reading from the N-terminus, the 177-residue chain is Ribosome rescue factor SmrB (177 aa).

Residues 22-45 form a disordered region; it reads SKKLRQDTIIHQPSKNFSEQQKQR. Over residues 30–41 the composition is skewed to polar residues; sequence IIHQPSKNFSEQ. In terms of domain architecture, Smr spans 98-173; the sequence is LDMHGMKQDE…GAGAILVLLS (76 aa).

This sequence belongs to the SmrB family. As to quaternary structure, associates with collided ribosomes, but not with correctly translating polysomes.

Acts as a ribosome collision sensor. Detects stalled/collided disomes (pairs of ribosomes where the leading ribosome is stalled and a second ribosome has collided with it) and endonucleolytically cleaves mRNA at the 5' boundary of the stalled ribosome. Stalled/collided disomes form a new interface (primarily via the 30S subunits) that binds SmrB. Cleaved mRNA becomes available for tmRNA ligation, leading to ribosomal subunit dissociation and rescue of stalled ribosomes. The protein is Ribosome rescue factor SmrB of Aliivibrio salmonicida (strain LFI1238) (Vibrio salmonicida (strain LFI1238)).